The following is a 374-amino-acid chain: Phenoloxidase-activating enzyme 1 (374 aa).

An N-terminal signal peptide occupies residues 1–19 (MWKSLVFFVSALIWSFGSS). Positions 20 to 120 (QDCTTPTGSR…QCGIDTTGDR (101 aa)) are cleaved as a propeptide — activation peptide. The Clip domain occupies 21-74 (DCTTPTGSRSNCVSLYQCQPLYNAFEQRPLPTHVVSYLGRSQCGFEGYVPRVCC). 3 disulfides stabilise this stretch: Cys-22-Cys-73, Cys-32-Cys-63, and Cys-38-Cys-74. Residues 83-97 (ATSARPTQAPTQGSS) are compositionally biased toward polar residues. Residues 83–114 (ATSARPTQAPTQGSSDVFPEDSSPAPRNQCGI) are disordered. Residues 121 to 370 (VYGGTITDLD…YIDWIQNTIA (250 aa)) enclose the Peptidase S1 domain. A disulfide bond links Cys-151 and Cys-167. His-166 functions as the Charge relay system in the catalytic mechanism. 2 residues coordinate Ca(2+): Glu-186 and Asp-194. Asp-228 functions as the Charge relay system in the catalytic mechanism. 2 disulfides stabilise this stretch: Cys-292/Cys-307 and Cys-317/Cys-346. Ser-321 (charge relay system) is an active-site residue.

Belongs to the peptidase S1 family. CLIP subfamily. Post-translationally, activated by the removal of the N-terminal inhibitory propeptide. As to expression, expressed in hemocytes.

The protein localises to the secreted. Its activity is regulated as follows. Inhibited by aprotenin. Not inhibited by EDTA, PMSF or leupeptin. Serine protease which, by cleaving and activating prophenoloxidase (PPO1) after immune challenge, plays an essential role in the melanization immune response to wounding. In Spodoptera litura (Asian cotton leafworm), this protein is Phenoloxidase-activating enzyme 1.